The chain runs to 133 residues: Large ribosomal subunit protein uL16c (133 aa).

It belongs to the universal ribosomal protein uL16 family. Part of the 50S ribosomal subunit.

It is found in the plastid. The protein resides in the chloroplast. The polypeptide is Large ribosomal subunit protein uL16c (Liriodendron tulipifera (Tuliptree)).